A 103-amino-acid chain; its full sequence is Large ribosomal subunit protein eL42 (103 aa).

Positions 18 and 21 each coordinate Zn(2+). Residues 18–81 (CPKCRTHTEH…TVLKLKCSKC (64 aa)) form a C4-type zinc finger. The tract at residues 40-62 (LSEGERRYARKKKGYGSKRKPEQ) is disordered. Basic residues predominate over residues 47-57 (YARKKKGYGSK). Zn(2+) is bound by residues Cys78 and Cys81.

Belongs to the eukaryotic ribosomal protein eL42 family. As to quaternary structure, part of the 50S ribosomal subunit. The cofactor is Zn(2+).

In terms of biological role, binds to the 23S rRNA. The polypeptide is Large ribosomal subunit protein eL42 (Desulfurococcus amylolyticus (strain DSM 18924 / JCM 16383 / VKM B-2413 / 1221n) (Desulfurococcus kamchatkensis)).